The chain runs to 608 residues: Histone-arginine methyltransferase CARM1 (608 aa).

The interval 28 to 139 (ATVSVFPGAR…GHTLERSVFS (112 aa)) is interaction with C9orf72. Residues 147-454 (AVQYFQFYGY…KRQSYDISIV (308 aa)) form the SAM-dependent MTase PRMT-type domain. Glutamine 160, arginine 169, glycine 193, and glutamate 215 together coordinate S-adenosyl-L-methionine. The residue at position 217 (serine 217) is a Phosphoserine. Lysine 228 is covalently cross-linked (Glycyl lysine isopeptide (Lys-Gly) (interchain with G-Cter in ubiquitin)). S-adenosyl-L-methionine-binding residues include glutamate 244 and serine 272. Residues 347 to 380 (RILMAKSVKYTVNFLEAKEGDLHRIEIPFKFHML) form a required for nuclear translocation region. The segment at 500-608 (TGSTYNLSSG…IPTNTMHYGS (109 aa)) is transactivation domain. The residue at position 551 (arginine 551) is a Dimethylated arginine.

This sequence belongs to the class I-like SAM-binding methyltransferase superfamily. Protein arginine N-methyltransferase family. In terms of assembly, homodimer. Interacts with NR1H4. Interacts with SNRPC. Interacts with the C-terminus of NCOA2/GRIP1, NCO3/ACTR and NCOA1/SRC1. Part of a complex consisting of CARM1, EP300/P300 and NCOA2/GRIP1. Interacts with FLII, TP53, myogenic factor MEF2, EP300/P300, TRIM24, CREBBP and CTNNB1. Interacts with RELA. Identified in a complex containing CARM1, TRIM24 and NCOA2/GRIP1. Interacts with NCOA3/SRC3. Interacts with SKP2. Interacts (via PH domain-like fold) with C9orf72. Interacts with PARP1; promoting PARP1 recruimtent to replication forks. Post-translationally, phosphorylation at Ser-217 is strongly increased during mitosis, and decreases rapidly to a very low, basal level after entry into the G1 phase of the cell cycle. Phosphorylation at Ser-217 interferes with S-adenosyl-L-methionine binding and strongly reduces methyltransferase activity. Phosphorylation at Ser-217 may promote cytosolic location. Auto-methylated on Arg-551. Methylation enhances transcription coactivator activity. Methylation is required for its role in the regulation of pre-mRNA alternative splicing. In terms of processing, ubiquitinated by E3 ubiquitin-protein ligase complex containing FBXO9 at Lys-228; leading to proteasomal degradation. As to expression, ubiquitously expressed. Within the brain, present in proliferating cells from lateral ventricular zone and dentate gyrus (at protein level).

The protein localises to the nucleus. Its subcellular location is the cytoplasm. It localises to the chromosome. It carries out the reaction L-arginyl-[protein] + 2 S-adenosyl-L-methionine = N(omega),N(omega)-dimethyl-L-arginyl-[protein] + 2 S-adenosyl-L-homocysteine + 2 H(+). Methylation of H3R17 (H3R17me) by CARM1 is stimulated by preacetylation of H3 'Lys-18' (H3K18ac) H3 'Lys-23' (H3K23ac) by EP300 and blocked by citrullination of H3 'Arg-17' (H3R17ci) by PADI4. Its function is as follows. Methylates (mono- and asymmetric dimethylation) the guanidino nitrogens of arginyl residues in several proteins involved in DNA packaging, transcription regulation, pre-mRNA splicing, and mRNA stability. Recruited to promoters upon gene activation together with histone acetyltransferases from EP300/P300 and p160 families, methylates histone H3 at 'Arg-17' (H3R17me), forming mainly asymmetric dimethylarginine (H3R17me2a), leading to activation of transcription via chromatin remodeling. During nuclear hormone receptor activation and TCF7L2/TCF4 activation, acts synergically with EP300/P300 and either one of the p160 histone acetyltransferases NCOA1/SRC1, NCOA2/GRIP1 and NCOA3/ACTR or CTNNB1/beta-catenin to activate transcription. During myogenic transcriptional activation, acts together with NCOA3/ACTR as a coactivator for MEF2C. During monocyte inflammatory stimulation, acts together with EP300/P300 as a coactivator for NF-kappa-B. Acts as a coactivator for PPARG, promotes adipocyte differentiation and the accumulation of brown fat tissue. Plays a role in the regulation of pre-mRNA alternative splicing by methylation of splicing factors. Also seems to be involved in p53/TP53 transcriptional activation. Methylates EP300/P300, both at 'Arg-2142', which may loosen its interaction with NCOA2/GRIP1, and at 'Arg-580' and 'Arg-604' in the KIX domain, which impairs its interaction with CREB and inhibits CREB-dependent transcriptional activation. Also methylates arginine residues in RNA-binding proteins PABPC1, ELAVL1 and ELAV4, which may affect their mRNA-stabilizing properties and the half-life of their target mRNAs. Acts as a transcriptional coactivator of ACACA/acetyl-CoA carboxylase by enriching H3R17 methylation at its promoter, thereby positively regulating fatty acid synthesis. Independently of its methyltransferase activity, involved in replication fork progression: promotes PARP1 recruitment to replication forks, leading to poly-ADP-ribosylation of chromatin at replication forks and reduced fork speed. This chain is Histone-arginine methyltransferase CARM1 (Carm1), found in Mus musculus (Mouse).